A 481-amino-acid chain; its full sequence is ATP synthase subunit beta (481 aa).

Position 167–174 (167–174 (GGAGVGKT)) interacts with ATP.

Belongs to the ATPase alpha/beta chains family. In terms of assembly, F-type ATPases have 2 components, CF(1) - the catalytic core - and CF(0) - the membrane proton channel. CF(1) has five subunits: alpha(3), beta(3), gamma(1), delta(1), epsilon(1). CF(0) has three main subunits: a(1), b(2) and c(9-12). The alpha and beta chains form an alternating ring which encloses part of the gamma chain. CF(1) is attached to CF(0) by a central stalk formed by the gamma and epsilon chains, while a peripheral stalk is formed by the delta and b chains.

Its subcellular location is the cell membrane. It catalyses the reaction ATP + H2O + 4 H(+)(in) = ADP + phosphate + 5 H(+)(out). Its function is as follows. Produces ATP from ADP in the presence of a proton gradient across the membrane. The catalytic sites are hosted primarily by the beta subunits. This chain is ATP synthase subunit beta, found in Corynebacterium diphtheriae (strain ATCC 700971 / NCTC 13129 / Biotype gravis).